A 454-amino-acid polypeptide reads, in one-letter code: UDP-N-acetylmuramoylalanine--D-glutamate ligase (454 aa).

ATP is bound at residue 114-120 (GTNGKTT).

The protein belongs to the MurCDEF family.

It is found in the cytoplasm. The catalysed reaction is UDP-N-acetyl-alpha-D-muramoyl-L-alanine + D-glutamate + ATP = UDP-N-acetyl-alpha-D-muramoyl-L-alanyl-D-glutamate + ADP + phosphate + H(+). It functions in the pathway cell wall biogenesis; peptidoglycan biosynthesis. Cell wall formation. Catalyzes the addition of glutamate to the nucleotide precursor UDP-N-acetylmuramoyl-L-alanine (UMA). The chain is UDP-N-acetylmuramoylalanine--D-glutamate ligase from Desulfitobacterium hafniense (strain Y51).